The sequence spans 525 residues: GMP synthase [glutamine-hydrolyzing] (525 aa).

Positions 9–207 (RILILDFGSQ…VRDICQCEAL (199 aa)) constitute a Glutamine amidotransferase type-1 domain. Catalysis depends on C86, which acts as the Nucleophile. Residues H181 and E183 contribute to the active site. Residues 208–400 (WTPAKIIDDA…LGLPYDMLYR (193 aa)) enclose the GMPS ATP-PPase domain. An ATP-binding site is contributed by 235–241 (SGGVDSS).

In terms of assembly, homodimer.

The enzyme catalyses XMP + L-glutamine + ATP + H2O = GMP + L-glutamate + AMP + diphosphate + 2 H(+). Its pathway is purine metabolism; GMP biosynthesis; GMP from XMP (L-Gln route): step 1/1. In terms of biological role, catalyzes the synthesis of GMP from XMP. In Shigella sonnei (strain Ss046), this protein is GMP synthase [glutamine-hydrolyzing].